The chain runs to 99 residues: Fetal and adult testis-expressed transcript protein homolog (99 aa).

The chain crosses the membrane as a helical span at residues Ala79–His98.

As to quaternary structure, interacts with BIK and RNF183. Interacts with IMMT/MIC60and EMD.

Its subcellular location is the mitochondrion. The protein resides in the mitochondrion outer membrane. It localises to the endoplasmic reticulum membrane. Its function is as follows. Involved in the regulation of endoplasmic reticulum (ER)-mitochondria coupling. Negatively regulates the ER-mitochondria distance and Ca(2+) transfer from ER to mitochondria possibly implicating it in the regulation of apoptosis. May collaborate with RNF183 to restrain BIK protein levels thus regulating apoptotic signaling. This Mus musculus (Mouse) protein is Fetal and adult testis-expressed transcript protein homolog (Fate1).